The chain runs to 406 residues: MKNEVKKVVLAYSGGLDTSIILKWLQDEYNCEVVTFTADIGQGEELEPARKKALSLGIKEENIFIKDLRDEFVKDYVFPMFRANAIYEGEYLLGTSIARPLIAKTQAQIALQTGADAVSHGATGKGNDQVRFELGYLAFNPDLKIIAPWREWDLNSREKLLAYAQKHGIDISKKKGKSPYSMDANLLHISYEGLVLEDPAHAPEEDMWRWSKSPKDAPNESEIIELDFQKGDLVAINGEKLSPAGLLTKLNELGCKHGIGRLDIVENRYVGMKSRGCYETPGGTILLKAHRALESITLDREAAHLKDELMPKYASLIYNGYWFSPERMMLQALIDESQIHANGRVKLELYKGNVIVIGRESSNDSLFNAAYCTFEEDEVYNQKDAAGFIKLNALRFIIAGKNGRKF.

ATP contacts are provided by residues 11–19 (AYSGGLDTS) and alanine 38. The L-citrulline site is built by tyrosine 91 and serine 96. Glycine 121 contributes to the ATP binding site. Positions 123, 127, and 128 each coordinate L-aspartate. Residue asparagine 127 coordinates L-citrulline. L-citrulline is bound by residues arginine 131, serine 181, serine 190, glutamate 266, and tyrosine 278.

This sequence belongs to the argininosuccinate synthase family. Type 1 subfamily. In terms of assembly, homotetramer.

It localises to the cytoplasm. It carries out the reaction L-citrulline + L-aspartate + ATP = 2-(N(omega)-L-arginino)succinate + AMP + diphosphate + H(+). It functions in the pathway amino-acid biosynthesis; L-arginine biosynthesis; L-arginine from L-ornithine and carbamoyl phosphate: step 2/3. This is Argininosuccinate synthase from Campylobacter jejuni (strain RM1221).